The primary structure comprises 513 residues: ATP synthase subunit alpha (513 aa).

Residue 169–176 (GDRQTGKT) coordinates ATP.

It belongs to the ATPase alpha/beta chains family. In terms of assembly, F-type ATPases have 2 components, CF(1) - the catalytic core - and CF(0) - the membrane proton channel. CF(1) has five subunits: alpha(3), beta(3), gamma(1), delta(1), epsilon(1). CF(0) has three main subunits: a(1), b(2) and c(9-12). The alpha and beta chains form an alternating ring which encloses part of the gamma chain. CF(1) is attached to CF(0) by a central stalk formed by the gamma and epsilon chains, while a peripheral stalk is formed by the delta and b chains.

The protein localises to the cell inner membrane. It carries out the reaction ATP + H2O + 4 H(+)(in) = ADP + phosphate + 5 H(+)(out). Functionally, produces ATP from ADP in the presence of a proton gradient across the membrane. The alpha chain is a regulatory subunit. This is ATP synthase subunit alpha from Ralstonia nicotianae (strain ATCC BAA-1114 / GMI1000) (Ralstonia solanacearum).